The primary structure comprises 662 residues: Cytochrome bo(3) ubiquinol oxidase subunit 1 (662 aa).

At 1-14 (MFGKLTFDAIPYHE) the chain is on the extracellular side. Residues 15–35 (PIIMITYIAIILIALCIASTI) traverse the membrane as a helical segment. Residues 36–58 (TYYKKWKYLWYEWFTTVDHKKIS) are Cytoplasmic-facing. Residues 59–79 (IMYGILAFVMLFRGFVDAILM) traverse the membrane as a helical segment. Residues Arg-71, Asp-75, and His-98 each coordinate a ubiquinone. At 80 to 106 (RTQQVVASAGFKGFLPPHHYDQIFTAH) the chain is on the extracellular side. Residue His-106 participates in heme b binding. A helical membrane pass occupies residues 107–127 (GVIMIFFVAMPLVIGLMNLVI). At 128–145 (PLQIGARDVAFPFLNNLS) the chain is on the cytoplasmic side. Residues 146 to 166 (FWLNVSSAVLLTLSLGIGEFA) traverse the membrane as a helical segment. At 167–189 (QTGWLAYPPLSGIKYSSGVGVDY) the chain is on the extracellular side. Position 170 (Trp-170) interacts with heme b. A helical membrane pass occupies residues 190-210 (WIWSLQISGVGTTLTGINFLV). At 211 to 232 (TILKMRAPGMSFFKMPVFTWTS) the chain is on the cytoplasmic side. The helical transmembrane segment at 233 to 253 (LCTNILIVISFPVLTVTLVLL) threads the bilayer. At 254–277 (TLDRYFNFHFFTNDLGGNAMMYVN) the chain is on the extracellular side. A helical membrane pass occupies residues 278 to 298 (LIWIWGHPEVYILVLPVFGVF). Position 284 (His-284) interacts with Cu(2+). A cross-link (1'-histidyl-3'-tyrosine (His-Tyr)) is located at residues 284–288 (HPEVY). Fe(II)-heme o is bound at residue Tyr-288. Residues 299-309 (SEVVATFSKKR) are Cytoplasmic-facing. Residues 310-330 (LFGYVSLVWATLSITILSFIV) form a helical membrane-spanning segment. Residues 331-346 (WLHHFFTMGAGADVNT) are Extracellular-facing. Residues His-333 and His-334 each contribute to the Cu(2+) site. A helical transmembrane segment spans residues 347 to 367 (FFGITTMIIAIPTGVKIFNWL). At 368–380 (FTIYQGRVHMHSS) the chain is on the cytoplasmic side. A helical membrane pass occupies residues 381–401 (ILWTLGFLVTFSIGGMTGVLL). Topologically, residues 402–413 (SVPPADFVLHNS) are extracellular. Residues His-411 and His-419 each coordinate Fe(II)-heme o. The chain crosses the membrane as a helical span at residues 414–434 (LFLVAHFHNVIIGGVVFGCFA). His-421 lines the heme b pocket. The Cytoplasmic segment spans residues 435–456 (GINYWFPKLFGFVLNEIWGKRA). A helical transmembrane segment spans residues 457 to 477 (FWFWIIGFFLAFIPLYFLGLM). Residues 478–493 (GMTRRLSQNIDSEFHM) are Extracellular-facing. Positions 481 and 482 each coordinate heme b. A helical membrane pass occupies residues 494-514 (LLCIAAIGACFIGIGIICQVI). The Cytoplasmic segment spans residues 515–586 (QFFISIKERR…INSINYHDIH (72 aa)). A helical transmembrane segment spans residues 587-607 (MPKNTGLGFMISIFSLFFGFS). Residue Ala-608 is a topological domain, extracellular. A helical membrane pass occupies residues 609 to 629 (VWHITWLCILSFLAIIISLFI). Topologically, residues 630-662 (NSLNEDTEYTISAEEIKKIEHQYWKNIQKAGLK) are cytoplasmic.

The protein belongs to the heme-copper respiratory oxidase family. The cytochrome bo(3) ubiquinol oxidase complex is a heterooctamer of two A chains, two B chains, two C chains and two D chains. Cu(2+) is required as a cofactor. Heme b serves as cofactor. It depends on Fe(II)-heme o as a cofactor.

The protein localises to the cell membrane. The enzyme catalyses 2 a ubiquinol + O2 + n H(+)(in) = 2 a ubiquinone + 2 H2O + n H(+)(out). Functionally, cytochrome bo(3) ubiquinol oxidase is the terminal enzyme in the aerobic respiratory chain. Catalyzes the four-electron reduction of O2 to water, using a ubiquinol as a membrane soluble electron donor for molecular oxygen reduction. Has proton pump activity across the membrane in addition to electron transfer, pumping 2 protons/electron and generating a proton motive force. All the redox centers of this enzyme complex are located within the largest subunit, subunit I. Protons are probably pumped via D- and K- channels found in this subunit. This Buchnera aphidicola subsp. Acyrthosiphon pisum (strain APS) (Acyrthosiphon pisum symbiotic bacterium) protein is Cytochrome bo(3) ubiquinol oxidase subunit 1 (cyoB).